The chain runs to 359 residues: Protein PAM71-homolog, chloroplastic (359 aa).

Residues 1-66 (MKLTSLSKNA…DLLWGKFRVR (66 aa)) constitute a chloroplast transit peptide. The interval 71–102 (GVGSGSYSGGEEDGSQSSSLDQSPATSSESLK) is disordered. Low complexity predominate over residues 85 to 98 (SQSSSLDQSPATSS). Transmembrane regions (helical) follow at residues 110-130 (SLSIALVLLSCGLVFSLITFV), 149-169 (AFSLIFVSEIGDKTFFIAALL), 177-197 (LVLLGSMGALSLMTILSVVIG), 207-227 (FQTTLPIGEYAAIALLMFFGL), 269-289 (LTNPLEILWKSFSLVFFAEWG), 311-331 (GAIAGHLVATVLAIMGGAFLA), and 339-359 (VGYVGGALFLVFAAATFFGVF).

Belongs to the GDT1 family.

The protein localises to the plastid. The protein resides in the chloroplast membrane. Functionally, probable chloroplast-localized Mn(2+)/H(+) and/or Ca(2+)/H(+) antiporter regulating Ca(2+), Mn(2+) and pH homeostasis. The sequence is that of Protein PAM71-homolog, chloroplastic from Arabidopsis thaliana (Mouse-ear cress).